The primary structure comprises 373 residues: Dual-specificity RNA methyltransferase RlmN (373 aa).

The active-site Proton acceptor is the E94. Positions 100–339 (EDDRATLCVS…VIVRKTRGDD (240 aa)) constitute a Radical SAM core domain. C107 and C344 are joined by a disulfide. Residues C114, C118, and C121 each contribute to the [4Fe-4S] cluster site. Residues 168–169 (GE), S200, 222–224 (SIH), and N301 each bind S-adenosyl-L-methionine. C344 serves as the catalytic S-methylcysteine intermediate.

It belongs to the radical SAM superfamily. RlmN family. [4Fe-4S] cluster is required as a cofactor.

The protein resides in the cytoplasm. It carries out the reaction adenosine(2503) in 23S rRNA + 2 reduced [2Fe-2S]-[ferredoxin] + 2 S-adenosyl-L-methionine = 2-methyladenosine(2503) in 23S rRNA + 5'-deoxyadenosine + L-methionine + 2 oxidized [2Fe-2S]-[ferredoxin] + S-adenosyl-L-homocysteine. The catalysed reaction is adenosine(37) in tRNA + 2 reduced [2Fe-2S]-[ferredoxin] + 2 S-adenosyl-L-methionine = 2-methyladenosine(37) in tRNA + 5'-deoxyadenosine + L-methionine + 2 oxidized [2Fe-2S]-[ferredoxin] + S-adenosyl-L-homocysteine. Functionally, specifically methylates position 2 of adenine 2503 in 23S rRNA and position 2 of adenine 37 in tRNAs. m2A2503 modification seems to play a crucial role in the proofreading step occurring at the peptidyl transferase center and thus would serve to optimize ribosomal fidelity. In Shewanella woodyi (strain ATCC 51908 / MS32), this protein is Dual-specificity RNA methyltransferase RlmN.